The sequence spans 450 residues: MREIVHVQAGQCGNQIGSKFWEVISDEHGIQPDGTFKGETDLQLERIDVYYNEANNGKYVPRAVLVDLEPGTMDSVRSGPFGQLFRPDNFVFGQSGAGNNWAKGHYTEGAELVDNVLDVIRKEAEGCDCLQGFQLTHSLGGGTGSGMGTLLISKIREEYPDRIMSSFSVVPSPKVSDTVVEPYNATLSVHQLVENTDETYCIDNEALYDICYRTLKLTNPTYGDLNHLVSLTMSGVTTCLRFPGQLNADLRKLAVNMVPFPRLHFFMPGFAPLSAKGTQAYRALTVAELTQQMFDAKNMMAACDPRHGRYLTVAAMFRGRMSMREVDEQMLNVQNKNSSYFVEWIPNNVKTAVCDIPPRGLKMAATFVGNSTAIQELFKRISEQFTAMFRRKAFLHWYTGEGMDEMEFTEAESNMNDLISEYQQYQEATAEDDVDGYAEGEAGETYESEQ.

GTP is bound by residues Gln11, Glu69, Ser138, Gly142, Thr143, Gly144, Asn204, and Asn226. Glu69 is a binding site for Mg(2+). The disordered stretch occupies residues 428–450 (ATAEDDVDGYAEGEAGETYESEQ). Positions 429-450 (TAEDDVDGYAEGEAGETYESEQ) are enriched in acidic residues.

Belongs to the tubulin family. As to quaternary structure, dimer of alpha and beta chains. A typical microtubule is a hollow water-filled tube with an outer diameter of 25 nm and an inner diameter of 15 nm. Alpha-beta heterodimers associate head-to-tail to form protofilaments running lengthwise along the microtubule wall with the beta-tubulin subunit facing the microtubule plus end conferring a structural polarity. Microtubules usually have 13 protofilaments but different protofilament numbers can be found in some organisms and specialized cells. The cofactor is Mg(2+). Post-translationally, cleaved by caspase ced-3 in vitro.

Its subcellular location is the cytoplasm. It localises to the cytoskeleton. In terms of biological role, tubulin is the major constituent of microtubules, a cylinder consisting of laterally associated linear protofilaments composed of alpha- and beta-tubulin heterodimers. Microtubules grow by the addition of GTP-tubulin dimers to the microtubule end, where a stabilizing cap forms. Below the cap, tubulin dimers are in GDP-bound state, owing to GTPase activity of alpha-tubulin. Required for the normal dynamic behavior of the non-centrosomal microtubules in the epidermal syncytium. Involved in the redistribution of microtubule end-binding protein EB1/ebp-2 caused by wounding. Required to modulate expression in the epidermis of antimicrobial peptides, such as nlp-29, after wounding, or fungal infection. The sequence is that of Tubulin beta-2 chain (tbb-2) from Caenorhabditis elegans.